A 1384-amino-acid polypeptide reads, in one-letter code: Enhancer of mRNA-decapping protein 4 (1384 aa).

WD repeat units follow at residues G171–Q211, N227–S274, G292–P331, and H340–T390. Disordered regions lie at residues T471–S494, A551–P584, and A796–E931. The span at S482–S494 shows a compositional bias: polar residues. The segment covering C834–I844 has biased composition (basic and acidic residues). Composition is skewed to polar residues over residues H854–E866 and S918–E931. The stretch at T930–Q1012 forms a coiled coil.

Belongs to the WD repeat EDC4 family.

Its subcellular location is the cytoplasm. It is found in the P-body. It localises to the nucleus. Functionally, in the process of mRNA degradation, seems to play a role in mRNA decapping. The chain is Enhancer of mRNA-decapping protein 4 (edc4) from Danio rerio (Zebrafish).